Here is a 1092-residue protein sequence, read N- to C-terminus: MLFDNKNRGALNSLNTPDIASLSISSMSDYHVFDFPGKDLQREEVIDLLDQQGFIPDDLIEQEVDWFYNSLGIDDLFFSRESPQLISNIIHSLYASKLDFFAKSKFNGIQPRLFSIKNKIITNDNHAIFMESNTGVSISDSQQKNFKFASDAVGNDTLEHGKDTIKKNRIEMDDSCPPYELDSEIDDLFLDNKSQKNCRLVSFWAPESELKLTFVYESVYPNDDPAGVDISSQDLLKGDIESISDKTMYKVSSNENKKLYGLLLKLVKEREGPVIKTTRSVENKDEIRLLVAYKRFTTKRYYSALNSLFHYYKLKPSKFYLESFNVKDDDIIIFSVYLNENQQLEDVLLHDVEAALKQVEREASLLYAIPNNSFHEVYQRRQFSPKEAIYAHIGAIFINHFVNRLGSDYQNLLSQITIKRNDTTLLEIVENLKRKLRNETLTQQTIINIMSKHYTIISKLYKNFAQIHYYHNSTKDMEKTLSFQRLEKVEPFKNDQEFEAYLNKFIPNDSPDLLILKTLNIFNKSILKTNFFITRKVAISFRLDPSLVMTKFEYPETPYGIFFVVGNTFKGFHIRFRDIARGGIRIVCSRNQDIYDLNSKNVIDENYQLASTQQRKNKDIPEGGSKGVILLNPGLVEHDQTFVAFSQYVDAMIDILINDPLKENYVNLLPKEEILFFGPDEGTAGFVDWATNHARVRNCPWWKSFLTGKSPSLGGIPHDEYGMTSLGVRAYVNKIYETLNLTNSTVYKFQTGGPDGDLGSNEILLSSPNECYLAILDGSGVLCDPKGLDKDELCRLAHERKMISDFDTSKLSNNGFFVSVDAMDIMLPNGTIVANGTTFRNTFHTQIFKFVDHVDIFVPCGGRPNSITLNNLHYFVDEKTGKCKIPYIVEGANLFITQPAKNALEEHGCILFKDASANKGGVTSSSMEVLASLALNDNDFVHKFIGDVSGERSALYKSYVVEVQSRIQKNAELEFGQLWNLNQLNGTHISEISNQLSFTINKLNDDLVASQELWLNDLKLRNYLLLDKIIPKILIDVAGPQSVLENIPESYLKVLLSSYLSSTFVYQNGIDVNIGKFLEFIGGLKREAEASA.

Lys626 is an active-site residue.

It belongs to the Glu/Leu/Phe/Val dehydrogenases family. As to quaternary structure, homotetramer. Interacts with NNK1. In terms of processing, phosphorylated by a complex containing the NNK1 kinase.

It catalyses the reaction L-glutamate + NAD(+) + H2O = 2-oxoglutarate + NH4(+) + NADH + H(+). Its function is as follows. NAD(+)-dependent glutamate dehydrogenase which degrades glutamate to ammonia and alpha-ketoglutarate. This is NAD-specific glutamate dehydrogenase (GDH2) from Saccharomyces cerevisiae (strain ATCC 204508 / S288c) (Baker's yeast).